A 228-amino-acid chain; its full sequence is Ephrin-A5 (228 aa).

Residues methionine 1–glycine 20 form the signal peptide. The Ephrin RBD domain maps to alanine 29–asparagine 162. A glycan (N-linked (GlcNAc...) asparagine) is linked at asparagine 37. 2 cysteine pairs are disulfide-bonded: cysteine 62–cysteine 102 and cysteine 90–cysteine 151. The GPI-anchor amidated asparagine moiety is linked to residue asparagine 203. A propeptide spans alanine 204–leucine 228 (removed in mature form).

It belongs to the ephrin family. As to expression, expressed in a graded fashion across the tectum being more strongly expressed towards the posterior pole.

The protein resides in the cell membrane. Cell surface GPI-bound ligand for Eph receptors, a family of receptor tyrosine kinases which are crucial for migration, repulsion and adhesion during neuronal, vascular and epithelial development. Binds promiscuously Eph receptors residing on adjacent cells, leading to contact-dependent bidirectional signaling into neighboring cells. Induces compartmentalized signaling within a caveolae-like membrane microdomain when bound to the extracellular domain of its cognate receptor. This signaling event requires the activity of the Fyn tyrosine kinase. Activates the EPHA3 receptor to regulate cell-cell adhesion and cytoskeletal organization. With the receptor EPHA2 may regulate lens fiber cells shape and interactions and be important for lens transparency maintenance. May function actively to stimulate axon fasciculation. Induces growth cone collapse and repulsion of retinal ganglion cell axons. The polypeptide is Ephrin-A5 (EFNA5) (Gallus gallus (Chicken)).